Consider the following 431-residue polypeptide: Tryptophan--tRNA ligase (431 aa).

Residues 12–14 and 20–21 contribute to the ATP site; these read TPS and GN. Positions 13 to 21 match the 'HIGH' region motif; it reads PSGTPHLGN. Aspartate 145 provides a ligand contact to L-tryptophan. ATP-binding positions include 157-159, leucine 197, and 204-208; these read GRD and KMSKS. A 'KMSKS' region motif is present at residues 204–208; it reads KMSKS.

The protein belongs to the class-I aminoacyl-tRNA synthetase family. As to quaternary structure, homodimer.

The protein localises to the cytoplasm. The catalysed reaction is tRNA(Trp) + L-tryptophan + ATP = L-tryptophyl-tRNA(Trp) + AMP + diphosphate + H(+). Functionally, catalyzes the attachment of tryptophan to tRNA(Trp). The sequence is that of Tryptophan--tRNA ligase from Xanthomonas campestris pv. campestris (strain ATCC 33913 / DSM 3586 / NCPPB 528 / LMG 568 / P 25).